We begin with the raw amino-acid sequence, 404 residues long: 6-deoxyerythronolide B hydroxylase (404 aa).

Position 351 (cysteine 351) interacts with heme.

Belongs to the cytochrome P450 family. The cofactor is heme.

The protein localises to the cytoplasm. The enzyme catalyses 6-deoxyerythronolide B + 2 reduced [2Fe-2S]-[ferredoxin] + O2 + 2 H(+) = erythronolide B + 2 oxidized [2Fe-2S]-[ferredoxin] + H2O. Its pathway is antibiotic biosynthesis; erythromycin biosynthesis. Its function is as follows. Catalyzes the conversion of 6-deoxyerythronolide B (6-DEB) to erythronolide B (EB) by the insertion of an oxygen at the 6S position of 6-DEB. Requires the participation of a ferredoxin and a ferredoxin reductase for the transfer of electrons from NADPH to the monooxygenase. The chain is 6-deoxyerythronolide B hydroxylase from Saccharopolyspora erythraea (strain ATCC 11635 / DSM 40517 / JCM 4748 / NBRC 13426 / NCIMB 8594 / NRRL 2338).